A 186-amino-acid chain; its full sequence is Acireductone dioxygenase (186 aa).

Positions 1 to 21 are disordered; sequence MSRLSIFPDGSTSMDQSSPTP. Polar residues predominate over residues 10–20; it reads GSTSMDQSSPT. Fe(2+) is bound by residues His103, His105, Glu109, and His147. His103, His105, Glu109, and His147 together coordinate Ni(2+).

Belongs to the acireductone dioxygenase (ARD) family. In terms of assembly, monomer. It depends on Fe(2+) as a cofactor. Ni(2+) is required as a cofactor.

It carries out the reaction 1,2-dihydroxy-5-(methylsulfanyl)pent-1-en-3-one + O2 = 3-(methylsulfanyl)propanoate + CO + formate + 2 H(+). It catalyses the reaction 1,2-dihydroxy-5-(methylsulfanyl)pent-1-en-3-one + O2 = 4-methylsulfanyl-2-oxobutanoate + formate + 2 H(+). The protein operates within amino-acid biosynthesis; L-methionine biosynthesis via salvage pathway; L-methionine from S-methyl-5-thio-alpha-D-ribose 1-phosphate: step 5/6. Catalyzes 2 different reactions between oxygen and the acireductone 1,2-dihydroxy-3-keto-5-methylthiopentene (DHK-MTPene) depending upon the metal bound in the active site. Fe-containing acireductone dioxygenase (Fe-ARD) produces formate and 2-keto-4-methylthiobutyrate (KMTB), the alpha-ketoacid precursor of methionine in the methionine recycle pathway. Ni-containing acireductone dioxygenase (Ni-ARD) produces methylthiopropionate, carbon monoxide and formate, and does not lie on the methionine recycle pathway. This Synechococcus sp. (strain CC9902) protein is Acireductone dioxygenase.